We begin with the raw amino-acid sequence, 166 residues long: Photosystem I assembly protein Ycf3 (166 aa).

TPR repeat units lie at residues 35 to 68 (AFVY…EVDP), 72 to 105 (SFIF…NPSL), and 120 to 153 (GEQA…APLN).

It belongs to the Ycf3 family.

It is found in the plastid. The protein resides in the chloroplast thylakoid membrane. Functionally, essential for the assembly of the photosystem I (PSI) complex. May act as a chaperone-like factor to guide the assembly of the PSI subunits. The chain is Photosystem I assembly protein Ycf3 from Ostreococcus tauri.